The sequence spans 123 residues: Protein Wnt-3a (123 aa).

Ser-1 carries the O-palmitoleoyl serine lipid modification. Cys-89 and Cys-104 form a disulfide bridge. Asn-90 is a glycosylation site (N-linked (GlcNAc...) asparagine).

It belongs to the Wnt family. Post-translationally, disulfide bonds have critical and distinct roles in secretion and activity. Loss of each conserved cysteine results in high molecular weight oxidized Wnt oligomers, which are formed through inter-Wnt disulfide bonding. In terms of processing, palmitoleoylation is required for efficient binding to frizzled receptors. Depalmitoleoylation leads to Wnt signaling pathway inhibition.

The protein localises to the secreted. It localises to the extracellular space. It is found in the extracellular matrix. Functionally, ligand for members of the frizzled family of seven transmembrane receptors. Functions in the canonical Wnt signaling pathway that results in activation of transcription factors of the TCF/LEF family. Required for normal embryonic mesoderm development and formation of caudal somites. Required for normal morphogenesis of the developing neural tube. The polypeptide is Protein Wnt-3a (WNT-3A) (Plethodon jordani (Red-cheeked salamander)).